A 306-amino-acid chain; its full sequence is Ornithine carbamoyltransferase (306 aa).

Carbamoyl phosphate-binding positions include 50-53 (STRT), Gln77, Arg101, and 128-131 (HPCQ). Residues Asn160, Asp224, and 228–229 (SM) each bind L-ornithine. Carbamoyl phosphate is bound by residues 261–262 (CL) and Arg289.

It belongs to the aspartate/ornithine carbamoyltransferase superfamily. OTCase family.

The protein resides in the cytoplasm. The catalysed reaction is carbamoyl phosphate + L-ornithine = L-citrulline + phosphate + H(+). It functions in the pathway amino-acid biosynthesis; L-arginine biosynthesis; L-arginine from L-ornithine and carbamoyl phosphate: step 1/3. Reversibly catalyzes the transfer of the carbamoyl group from carbamoyl phosphate (CP) to the N(epsilon) atom of ornithine (ORN) to produce L-citrulline. The polypeptide is Ornithine carbamoyltransferase (Aquifex aeolicus (strain VF5)).